The chain runs to 211 residues: Flagellar calcium-binding protein (211 aa).

The disordered stretch occupies residues M1–E29. Residues L15–E29 are compositionally biased toward basic and acidic residues. 4 EF-hand domains span residues E45–L80, D81–F116, Y127–W162, and A164–D199. Ca(2+) contacts are provided by D58, N60, T62, K64, and E69. Ca(2+) contacts are provided by D140, S142, N144, E151, D177, N179, T181, S183, and E188.

Belongs to the calflagin family.

The protein resides in the cell projection. The protein localises to the cilium. Its subcellular location is the flagellum. In terms of biological role, may contribute to the rapid motility of the trypanosomes, playing a role either in flagellar structure or in calcium metabolism. Could alternate between a GDP-bound inactive form to a calcium/GTP-bound active form. In Trypanosoma cruzi, this protein is Flagellar calcium-binding protein (FCABP).